A 116-amino-acid chain; its full sequence is Toxin CSTX-10 (116 aa).

Residues 1-20 (MKVLVIFAVLSLVIFSNCSA) form the signal peptide. Positions 21-47 (ETDEDFFGEESFEADDIIPFIAKEQVR) are excised as a propeptide. Disulfide bonds link Cys-53-Cys-68, Cys-60-Cys-77, Cys-67-Cys-94, and Cys-79-Cys-92.

Expressed by the venom gland.

Its subcellular location is the secreted. It is found in the target cell membrane. Functionally, spider venom toxin that shows calcium channel blocking activity and exhibits cytolytic activity by affecting the outer leaflet curvature and/or pore formation across the membrane. It blocks L-type calcium channels (Cav1/CACNA1) in mammalian neurons at nanomolar concentrations. Furthermore, it produces a slow voltage-independent block of mid/low and high voltage-activated calcium channels in cockroach neurons. Potassium ions, histamine, M-ctenitoxin-Cs1a (AC P83619), CSTX-9 (AC P58604), and CSTX-13 (AC P83919) synergistically increase the insecticidal activity of this toxin. In vivo, it causes paralysis in blow flies and provokes death in drosophila. This is Toxin CSTX-10 from Cupiennius salei (American wandering spider).